Here is a 380-residue protein sequence, read N- to C-terminus: Lipoyl synthase, mitochondrial (380 aa).

[4Fe-4S] cluster contacts are provided by Cys-104, Cys-109, Cys-115, Cys-135, Cys-139, Cys-142, and Ser-350. A Radical SAM core domain is found at 120 to 339 (EHGTQTATIM…ETRGNELGFL (220 aa)).

Belongs to the radical SAM superfamily. Lipoyl synthase family. [4Fe-4S] cluster serves as cofactor.

Its subcellular location is the mitochondrion. It catalyses the reaction [[Fe-S] cluster scaffold protein carrying a second [4Fe-4S](2+) cluster] + N(6)-octanoyl-L-lysyl-[protein] + 2 oxidized [2Fe-2S]-[ferredoxin] + 2 S-adenosyl-L-methionine + 4 H(+) = [[Fe-S] cluster scaffold protein] + N(6)-[(R)-dihydrolipoyl]-L-lysyl-[protein] + 4 Fe(3+) + 2 hydrogen sulfide + 2 5'-deoxyadenosine + 2 L-methionine + 2 reduced [2Fe-2S]-[ferredoxin]. It functions in the pathway protein modification; protein lipoylation via endogenous pathway; protein N(6)-(lipoyl)lysine from octanoyl-[acyl-carrier-protein]: step 2/2. Its function is as follows. Catalyzes the radical-mediated insertion of two sulfur atoms into the C-6 and C-8 positions of the octanoyl moiety bound to the lipoyl domains of lipoate-dependent enzymes, thereby converting the octanoylated domains into lipoylated derivatives. The polypeptide is Lipoyl synthase, mitochondrial (Culex quinquefasciatus (Southern house mosquito)).